We begin with the raw amino-acid sequence, 218 residues long: Lipoprotein-releasing system ATP-binding protein LolD (218 aa).

The ABC transporter domain maps to 2 to 218 (IKLEGITKSF…HMVDGTIKKD (217 aa)). An ATP-binding site is contributed by 34–41 (GPSGAGKT).

It belongs to the ABC transporter superfamily. Lipoprotein translocase (TC 3.A.1.125) family. In terms of assembly, the complex is composed of two ATP-binding proteins (LolD) and two transmembrane proteins (LolC and LolE).

It is found in the cell inner membrane. In terms of biological role, part of the ABC transporter complex LolCDE involved in the translocation of mature outer membrane-directed lipoproteins, from the inner membrane to the periplasmic chaperone, LolA. Responsible for the formation of the LolA-lipoprotein complex in an ATP-dependent manner. This Bacteroides thetaiotaomicron (strain ATCC 29148 / DSM 2079 / JCM 5827 / CCUG 10774 / NCTC 10582 / VPI-5482 / E50) protein is Lipoprotein-releasing system ATP-binding protein LolD.